Here is a 362-residue protein sequence, read N- to C-terminus: Large ribosomal subunit protein uL2m (362 aa).

The N-terminal 23 residues, Met-1–Tyr-23, are a transit peptide targeting the mitochondrion. The disordered stretch occupies residues Ala-306–Arg-362. Residues Leu-351–Arg-362 are compositionally biased toward basic and acidic residues.

Belongs to the universal ribosomal protein uL2 family. In terms of assembly, component of the mitochondrial large ribosomal subunit (mt-LSU). Mature yeast 74S mitochondrial ribosomes consist of a small (37S) and a large (54S) subunit. The 37S small subunit contains a 15S ribosomal RNA (15S mt-rRNA) and at least 32 different proteins. The 54S large subunit contains a 21S rRNA (21S mt-rRNA) and at least 45 different proteins. uL2m has a Na/K ligand binding site.

It localises to the mitochondrion. In terms of biological role, component of the mitochondrial ribosome (mitoribosome), a dedicated translation machinery responsible for the synthesis of mitochondrial genome-encoded proteins, including at least some of the essential transmembrane subunits of the mitochondrial respiratory chain. The mitoribosomes are attached to the mitochondrial inner membrane and translation products are cotranslationally integrated into the membrane. The chain is Large ribosomal subunit protein uL2m (rml2) from Schizosaccharomyces pombe (strain 972 / ATCC 24843) (Fission yeast).